Reading from the N-terminus, the 206-residue chain is LexA repressor (206 aa).

Positions 29 to 49 form a DNA-binding region, H-T-H motif; that stretch reads VREICEAVGLRSTSTVHGHLA. Catalysis depends on for autocatalytic cleavage activity residues serine 130 and lysine 167.

This sequence belongs to the peptidase S24 family. In terms of assembly, homodimer.

The catalysed reaction is Hydrolysis of Ala-|-Gly bond in repressor LexA.. Its function is as follows. Represses a number of genes involved in the response to DNA damage (SOS response), including recA and lexA. In the presence of single-stranded DNA, RecA interacts with LexA causing an autocatalytic cleavage which disrupts the DNA-binding part of LexA, leading to derepression of the SOS regulon and eventually DNA repair. The polypeptide is LexA repressor (Alkaliphilus oremlandii (strain OhILAs) (Clostridium oremlandii (strain OhILAs))).